The following is a 240-amino-acid chain: DNA repair protein RecO (240 aa).

The protein belongs to the RecO family.

Its function is as follows. Involved in DNA repair and RecF pathway recombination. The protein is DNA repair protein RecO of Xanthomonas oryzae pv. oryzae (strain MAFF 311018).